A 445-amino-acid polypeptide reads, in one-letter code: Elongation factor 1-alpha (445 aa).

The tr-type G domain maps to 5-230 (KVHISLVVIG…DNLEPPKRPS (226 aa)). Residues 14 to 21 (GHVDSGKS) form a G1 region. 14–21 (GHVDSGKS) contributes to the GTP binding site. Lys-55 is modified (N6,N6-dimethyllysine). Positions 70-74 (CITID) are G2. An N6,N6,N6-trimethyllysine modification is found at Lys-79. The segment at 91–94 (DAPG) is G3. GTP-binding positions include 91-95 (DAPGH) and 153-156 (NKFD). Residues 153–156 (NKFD) are G4. N6,N6,N6-trimethyllysine is present on Lys-187. The interval 194 to 196 (SGW) is G5. At Lys-261 the chain carries N6-methyllysine. N6,N6,N6-trimethyllysine occurs at positions 306 and 396.

The protein belongs to the TRAFAC class translation factor GTPase superfamily. Classic translation factor GTPase family. EF-Tu/EF-1A subfamily.

Its subcellular location is the cytoplasm. Its function is as follows. This protein promotes the GTP-dependent binding of aminoacyl-tRNA to the A-site of ribosomes during protein biosynthesis. In Euglena gracilis, this protein is Elongation factor 1-alpha (TEF).